We begin with the raw amino-acid sequence, 494 residues long: Tripartite motif-containing protein 5 (494 aa).

The residue at position 2 (Ala2) is an N-acetylalanine. The RING-type zinc-finger motif lies at Cys15 to Arg59. The residue at position 86 (Ser86) is a Phosphoserine. The segment at Gln91–Val132 adopts a B box-type zinc-finger fold. The Zn(2+) site is built by Cys96, His99, Cys118, and His124. A coiled-coil region spans residues Val132–Val223. Positions Phe186–Lys199 are required for interaction with GABARAP and for autophagy. A B30.2/SPRY domain is found at Pro280 to Ser494.

Belongs to the TRIM/RBCC family. As to quaternary structure, can form homodimers and homotrimers. In addition to lower-order dimerization, also exhibits a higher-order multimerization and both low- and high-order multimerizations are essential for its restriction activity. Interacts with BTBD1 and BTBD2. Interacts with PSMC4, PSMC5, PSMD7 and HSPA8/HSC70. Interacts (via B30.2/SPRY domain) with HSPA1A/B. Interacts with PSMC2, MAP3K7/TAK1, TAB2 and TAB3. Interacts with SQSTM1. Interacts with TRIM6 and TRIM34. Interacts with ULK1 (phosphorylated form), GABARAP, GABARAPL1, GABARAPL2, MAP1LC3A, MAP1LC3C and BECN1. Degraded in a proteasome-independent fashion in the absence of viral infection but in a proteasome-dependent fashion following exposure to restriction sensitive virus. Post-translationally, autoubiquitinated in a RING finger- and UBE2D2-dependent manner. Monoubiquitinated by TRIM21. Deubiquitinated by Yersinia YopJ. Ubiquitination may not lead to proteasomal degradation.

Its subcellular location is the cytoplasm. It localises to the nucleus. It catalyses the reaction S-ubiquitinyl-[E2 ubiquitin-conjugating enzyme]-L-cysteine + [acceptor protein]-L-lysine = [E2 ubiquitin-conjugating enzyme]-L-cysteine + N(6)-ubiquitinyl-[acceptor protein]-L-lysine.. It participates in protein modification; protein ubiquitination. In terms of biological role, capsid-specific restriction factor that prevents infection from non-host-adapted retroviruses. Blocks viral replication early in the life cycle, after viral entry but before reverse transcription. In addition to acting as a capsid-specific restriction factor, also acts as a pattern recognition receptor that activates innate immune signaling in response to the retroviral capsid lattice. Binding to the viral capsid triggers its E3 ubiquitin ligase activity, and in concert with the heterodimeric ubiquitin conjugating enzyme complex UBE2V1-UBE2N (also known as UBC13-UEV1A complex) generates 'Lys-63'-linked polyubiquitin chains, which in turn are catalysts in the autophosphorylation of the MAP3K7/TAK1 complex (includes TAK1, TAB2, and TAB3). Activation of the MAP3K7/TAK1 complex by autophosphorylation results in the induction and expression of NF-kappa-B and MAPK-responsive inflammatory genes, thereby leading to an innate immune response in the infected cell. Plays a role in regulating autophagy through activation of autophagy regulator BECN1 by causing its dissociation from its inhibitors BCL2 and TAB2. In Cebuella pygmaea (Pygmy marmoset), this protein is Tripartite motif-containing protein 5 (TRIM5).